The chain runs to 73 residues: MRIAVLFFTIFFFMSQVLPAKGKFKEICERPNGSCRDFCLETEIHVGRCLNSRPCCLPLGHQPRIESTTPKKD.

The N-terminal stretch at 1–22 (MRIAVLFFTIFFFMSQVLPAKG) is a signal peptide. 3 cysteine pairs are disulfide-bonded: Cys-28-Cys-55, Cys-35-Cys-49, and Cys-39-Cys-56.

It belongs to the beta-defensin family.

It is found in the secreted. In terms of biological role, has antibacterial activity. The sequence is that of Putative beta-defensin 108A from Homo sapiens (Human).